A 76-amino-acid chain; its full sequence is DNA-directed RNA polymerase subunit Rpo10 (76 aa).

Zn(2+)-binding residues include C16, C19, C53, and C54.

It belongs to the archaeal Rpo10/eukaryotic RPB10 RNA polymerase subunit family. Part of the RNA polymerase complex. Zn(2+) serves as cofactor.

The protein resides in the cytoplasm. The enzyme catalyses RNA(n) + a ribonucleoside 5'-triphosphate = RNA(n+1) + diphosphate. In terms of biological role, DNA-dependent RNA polymerase (RNAP) catalyzes the transcription of DNA into RNA using the four ribonucleoside triphosphates as substrates. The polypeptide is DNA-directed RNA polymerase subunit Rpo10 (Archaeoglobus fulgidus (strain ATCC 49558 / DSM 4304 / JCM 9628 / NBRC 100126 / VC-16)).